An 824-amino-acid polypeptide reads, in one-letter code: ABC transporter B family member 7 (824 aa).

A disordered region spans residues 41–101 (RNSVKFNLDT…NKNNKNKINN (61 aa)). The span at 63 to 101 (NNNKNNNNNNNNNNNNNNNNNNNNNNNNNNKNNKNKINN) shows a compositional bias: low complexity. 6 consecutive transmembrane segments (helical) span residues 164-184 (IWYFVFAFLALSITTLCQLAL), 252-272 (WIIIIVLVQTPFLFARYLLFT), 325-345 (LSTLVRCSLQLIGGLLILVFL), 347-367 (WKVTLLMISFLVILLISFLVF), 431-451 (AFWISFGSLLVMGTIIGIYGF), and 461-481 (ILLLQFILYSLMITASMNGLI). The ABC transmembrane type-1 domain occupies 167–489 (FVFAFLALSI…LIGSINEIQK (323 aa)). Positions 521-767 (ISFDNVYFNN…STSFYVTSVL (247 aa)) constitute an ABC transporter domain. Residue 570–576 (GPSQSKE) coordinates ATP. The tract at residues 772 to 813 (NKYNNNNNNNNNNNNNNNNNNNNNNNNNNNNNNNNNNNNINN) is disordered.

It belongs to the ABC transporter superfamily. ABCB family.

Its subcellular location is the membrane. The protein is ABC transporter B family member 7 (abcB7) of Dictyostelium discoideum (Social amoeba).